A 495-amino-acid polypeptide reads, in one-letter code: Meiosis-specific nuclear structural protein 1 (495 aa).

Residues 1–314 form an interaction with BBOF1 region; it reads MASKRRNMSC…KLEEMLRQRE (314 aa). The stretch at 59 to 410 forms a coiled coil; sequence LLQNEQFELD…QLEHRRAVEK (352 aa). Position 188 is a phosphotyrosine (Y188).

The protein belongs to the MNS1 family. Able to form oligomers. Microtubule inner protein component of sperm flagellar doublet microtubules. Interacts with ODAD1. Interacts with BBOF1.

The protein localises to the nucleus. It is found in the cytoplasm. It localises to the cytoskeleton. Its subcellular location is the cilium axoneme. The protein resides in the flagellum axoneme. Microtubule inner protein (MIP) part of the dynein-decorated doublet microtubules (DMTs) in cilia axoneme, which is required for motile cilia beating. May play a role in the control of meiotic division and germ cell differentiation through regulation of pairing and recombination during meiosis. Required for sperm flagella assembly. May play a role in the assembly and function of the outer dynein arm-docking complex (ODA-DC). ODA-DC mediates outer dynein arms (ODA) binding onto the axonemal doublet microtubules. This is Meiosis-specific nuclear structural protein 1 (MNS1) from Macaca fascicularis (Crab-eating macaque).